Reading from the N-terminus, the 184-residue chain is Ribosome-recycling factor (184 aa).

This sequence belongs to the RRF family.

The protein resides in the cytoplasm. Responsible for the release of ribosomes from messenger RNA at the termination of protein biosynthesis. May increase the efficiency of translation by recycling ribosomes from one round of translation to another. In Clostridium botulinum (strain ATCC 19397 / Type A), this protein is Ribosome-recycling factor.